The following is a 308-amino-acid chain: Neurexophilin-4 (308 aa).

Positions 1 to 23 (MRLLPEWFLLLFGPWLLRKAVSA) are cleaved as a signal peptide. The tract at residues 24 to 84 (QIPESGRPQY…GALARAGAAG (61 aa)) is II. Over residues 40–51 (AAGAGAPGQQLP) the composition is skewed to low complexity. The tract at residues 40-59 (AAGAGAPGQQLPEPRSSDGL) is disordered. N72, N133, N143, and N149 each carry an N-linked (GlcNAc...) asparagine glycan. Positions 85 to 163 (ALPAQRTKRK…IVPPSKRVEF (79 aa)) are III. The segment at 164–224 (GGVWLPGPVP…PLGGALGVPG (61 aa)) is IV (linker domain). The segment at 225–308 (AKESRAFNCH…NFQSEHPYFG (84 aa)) is v (Cys-rich).

It belongs to the neurexophilin family. May be proteolytically processed at the boundary between the N-terminal non-conserved and the central conserved domain in neuron-like cells. As to expression, expressed in brain, spleen, and testis.

Its subcellular location is the secreted. In terms of biological role, may be signaling molecules that resemble neuropeptides and that act by binding to alpha-neurexins and possibly other receptors. The polypeptide is Neurexophilin-4 (NXPH4) (Homo sapiens (Human)).